The primary structure comprises 274 residues: NH(3)-dependent NAD(+) synthetase (274 aa).

46-53 (GISGGQDS) contacts ATP. A Mg(2+)-binding site is contributed by Asp52. Position 140 (Arg140) interacts with deamido-NAD(+). Thr160 provides a ligand contact to ATP. Glu165 provides a ligand contact to Mg(2+). Deamido-NAD(+) contacts are provided by Lys173 and Asp180. The ATP site is built by Lys189 and Thr211. 260–261 (HK) is a deamido-NAD(+) binding site.

It belongs to the NAD synthetase family. As to quaternary structure, homodimer.

The enzyme catalyses deamido-NAD(+) + NH4(+) + ATP = AMP + diphosphate + NAD(+) + H(+). Its pathway is cofactor biosynthesis; NAD(+) biosynthesis; NAD(+) from deamido-NAD(+) (ammonia route): step 1/1. Functionally, catalyzes the ATP-dependent amidation of deamido-NAD to form NAD. Uses ammonia as a nitrogen source. The chain is NH(3)-dependent NAD(+) synthetase from Streptococcus pyogenes serotype M18 (strain MGAS8232).